We begin with the raw amino-acid sequence, 121 residues long: UPF0102 protein Strop_1320 (121 aa).

Belongs to the UPF0102 family.

The protein is UPF0102 protein Strop_1320 of Salinispora tropica (strain ATCC BAA-916 / DSM 44818 / JCM 13857 / NBRC 105044 / CNB-440).